The chain runs to 241 residues: Chlorophyll a-b binding protein 6, chloroplastic (241 aa).

The N-terminal 35 residues, 1 to 35 (MASNSLMSCGIAAVYPSLLSSSKSKFVSAGVPLPN), are a transit peptide targeting the chloroplast. Residue tryptophan 48 coordinates chlorophyll b. Positions 68, 87, and 90 each coordinate chlorophyll a. A chlorophyll b-binding site is contributed by arginine 92. Residues 93–113 (WAMLAVPGILVPEALGYGNWV) form a helical membrane-spanning segment. Leucine 129 contributes to the chlorophyll a binding site. Residues 132 to 152 (PVPWGTLPTILAIEFLAIAFV) traverse the membrane as a helical segment. Chlorophyll b is bound by residues valine 133, glutamate 153, and arginine 156. Chlorophyll a contacts are provided by lysine 190, glutamate 191, asparagine 194, arginine 196, glutamine 208, and histidine 224. A helical transmembrane segment spans residues 197 to 217 (LALLAFVGFCVQQSAYPGTGP).

It belongs to the light-harvesting chlorophyll a/b-binding (LHC) protein family. As to quaternary structure, the LHC complex consists of chlorophyll a-b binding proteins. Red-emitting heterodimer with LHCA4. Interacts with LHCA5. The cofactor is Binds at least 14 chlorophylls (8 Chl-a and 6 Chl-b) and carotenoids such as lutein and neoxanthin.. Photoregulated by reversible phosphorylation of its threonine residues.

It is found in the plastid. Its subcellular location is the chloroplast thylakoid membrane. Its function is as follows. The light-harvesting complex (LHC) functions as a light receptor, it captures and delivers excitation energy to photosystems with which it is closely associated. The sequence is that of Chlorophyll a-b binding protein 6, chloroplastic from Arabidopsis thaliana (Mouse-ear cress).